Reading from the N-terminus, the 290-residue chain is Ribonuclease HIII (290 aa).

Positions 78 to 290 constitute an RNase H type-2 domain; sequence LPLIGTDEVG…FKNTEKAKNA (213 aa). Residues Asp-84, Glu-85, and Asp-187 each contribute to the a divalent metal cation site.

It belongs to the RNase HII family. RnhC subfamily. Mn(2+) serves as cofactor. The cofactor is Mg(2+).

The protein resides in the cytoplasm. It catalyses the reaction Endonucleolytic cleavage to 5'-phosphomonoester.. Functionally, endonuclease that specifically degrades the RNA of RNA-DNA hybrids. In Streptococcus pneumoniae serotype 2 (strain D39 / NCTC 7466), this protein is Ribonuclease HIII.